A 143-amino-acid polypeptide reads, in one-letter code: Aspartate 1-decarboxylase (143 aa).

The active-site Schiff-base intermediate with substrate; via pyruvic acid is the S25. S25 carries the post-translational modification Pyruvic acid (Ser). Residue T57 participates in substrate binding. Catalysis depends on Y58, which acts as the Proton donor. A substrate-binding site is contributed by 73–75 (GAA).

The protein belongs to the PanD family. As to quaternary structure, heterooctamer of four alpha and four beta subunits. Pyruvate is required as a cofactor. In terms of processing, is synthesized initially as an inactive proenzyme, which is activated by self-cleavage at a specific serine bond to produce a beta-subunit with a hydroxyl group at its C-terminus and an alpha-subunit with a pyruvoyl group at its N-terminus.

It localises to the cytoplasm. The enzyme catalyses L-aspartate + H(+) = beta-alanine + CO2. Its pathway is cofactor biosynthesis; (R)-pantothenate biosynthesis; beta-alanine from L-aspartate: step 1/1. Its function is as follows. Catalyzes the pyruvoyl-dependent decarboxylation of aspartate to produce beta-alanine. The sequence is that of Aspartate 1-decarboxylase from Mycobacterium ulcerans (strain Agy99).